Consider the following 261-residue polypeptide: Cytochrome c oxidase subunit 3 (261 aa).

The Mitochondrial matrix portion of the chain corresponds to 1–15 (MTHQTHAYHMVNPSP). Residues 16–34 (WPLTGALSALLMTSGLIMW) traverse the membrane as a helical segment. The Mitochondrial intermembrane portion of the chain corresponds to 35–40 (FHFNST). The helical transmembrane segment at 41-66 (TLLMLGLTTNMLTMYQWWRDVIREST) threads the bilayer. Over 67–72 (FQGHHT) the chain is Mitochondrial matrix. Residues 73–105 (PNVQKGLRYGMILFIISEVLFFTGFFWAFYHSS) form a helical membrane-spanning segment. At 106–128 (LAPTPELGGCWPPTGIHPLNPLE) the chain is on the mitochondrial intermembrane side. The helical transmembrane segment at 129 to 152 (VPLLNTSVLLASGVSITWAHHSLM) threads the bilayer. Topologically, residues 153-155 (EGN) are mitochondrial matrix. Residues 156 to 183 (RNHMLQALFITIALGVYFTLLQASEYYE) traverse the membrane as a helical segment. Over 184-190 (APFTISD) the chain is Mitochondrial intermembrane. A helical membrane pass occupies residues 191 to 223 (GVYGSTFFVATGFHGLHVIIGSTFLIVCFFRQL). Over 224-232 (KFHFTSNHH) the chain is Mitochondrial matrix. Residues 233–256 (FGFEAAAWYWHFVDVVWLFLYVSI) form a helical membrane-spanning segment. The Mitochondrial intermembrane portion of the chain corresponds to 257–261 (YWWGS).

This sequence belongs to the cytochrome c oxidase subunit 3 family. As to quaternary structure, component of the cytochrome c oxidase (complex IV, CIV), a multisubunit enzyme composed of 14 subunits. The complex is composed of a catalytic core of 3 subunits MT-CO1, MT-CO2 and MT-CO3, encoded in the mitochondrial DNA, and 11 supernumerary subunits COX4I, COX5A, COX5B, COX6A, COX6B, COX6C, COX7A, COX7B, COX7C, COX8 and NDUFA4, which are encoded in the nuclear genome. The complex exists as a monomer or a dimer and forms supercomplexes (SCs) in the inner mitochondrial membrane with NADH-ubiquinone oxidoreductase (complex I, CI) and ubiquinol-cytochrome c oxidoreductase (cytochrome b-c1 complex, complex III, CIII), resulting in different assemblies (supercomplex SCI(1)III(2)IV(1) and megacomplex MCI(2)III(2)IV(2)).

The protein resides in the mitochondrion inner membrane. The catalysed reaction is 4 Fe(II)-[cytochrome c] + O2 + 8 H(+)(in) = 4 Fe(III)-[cytochrome c] + 2 H2O + 4 H(+)(out). Functionally, component of the cytochrome c oxidase, the last enzyme in the mitochondrial electron transport chain which drives oxidative phosphorylation. The respiratory chain contains 3 multisubunit complexes succinate dehydrogenase (complex II, CII), ubiquinol-cytochrome c oxidoreductase (cytochrome b-c1 complex, complex III, CIII) and cytochrome c oxidase (complex IV, CIV), that cooperate to transfer electrons derived from NADH and succinate to molecular oxygen, creating an electrochemical gradient over the inner membrane that drives transmembrane transport and the ATP synthase. Cytochrome c oxidase is the component of the respiratory chain that catalyzes the reduction of oxygen to water. Electrons originating from reduced cytochrome c in the intermembrane space (IMS) are transferred via the dinuclear copper A center (CU(A)) of subunit 2 and heme A of subunit 1 to the active site in subunit 1, a binuclear center (BNC) formed by heme A3 and copper B (CU(B)). The BNC reduces molecular oxygen to 2 water molecules using 4 electrons from cytochrome c in the IMS and 4 protons from the mitochondrial matrix. This Antilope cervicapra (Blackbuck) protein is Cytochrome c oxidase subunit 3 (MT-CO3).